Reading from the N-terminus, the 78-residue chain is Translation initiation factor IF-1, chloroplastic (78 aa).

The region spanning 1–72 is the S1-like domain; it reads MKKQNLIDME…TKGRITYRLR (72 aa).

It belongs to the IF-1 family. As to quaternary structure, component of the 30S ribosomal translation pre-initiation complex which assembles on the 30S ribosome in the order IF-2 and IF-3, IF-1 and N-formylmethionyl-tRNA(fMet); mRNA recruitment can occur at any time during PIC assembly.

The protein resides in the plastid. It is found in the chloroplast. Functionally, one of the essential components for the initiation of protein synthesis. Stabilizes the binding of IF-2 and IF-3 on the 30S subunit to which N-formylmethionyl-tRNA(fMet) subsequently binds. Helps modulate mRNA selection, yielding the 30S pre-initiation complex (PIC). Upon addition of the 50S ribosomal subunit IF-1, IF-2 and IF-3 are released leaving the mature 70S translation initiation complex. This is Translation initiation factor IF-1, chloroplastic from Physcomitrium patens (Spreading-leaved earth moss).